We begin with the raw amino-acid sequence, 842 residues long: Glucans biosynthesis glucosyltransferase H (842 aa).

6 helical membrane-spanning segments follow: residues 141–161 (LLLLTLAQTVVATWYMKTILP), 194–214 (ILLLFAVLFCWVSAGFWTALM), 513–533 (VFLTGVMSYLSAPLWFMFLAL), 570–590 (LFASTMILLFLPKLLSIILIW), 615–635 (VLLAPVRMLFHTVFVVSAFLG), and 680–700 (FLFWLAPIVFSLILSPFVSVI).

This sequence belongs to the glycosyltransferase 2 family. OpgH subfamily.

The protein localises to the cell inner membrane. Its pathway is glycan metabolism; osmoregulated periplasmic glucan (OPG) biosynthesis. In terms of biological role, involved in the biosynthesis of osmoregulated periplasmic glucans (OPGs). The sequence is that of Glucans biosynthesis glucosyltransferase H from Enterobacter sp. (strain 638).